The sequence spans 299 residues: F-actin-capping protein subunit alpha-3 (299 aa).

Residues Ser-2 and Ser-290 each carry the phosphoserine modification.

Belongs to the F-actin-capping protein alpha subunit family. As to quaternary structure, component of the F-actin capping complex, composed of a heterodimer of an alpha and a beta subunit. Component of the WASH complex, composed of F-actin-capping protein subunit alpha (CAPZA1, CAPZA2 or CAPZA3), F-actin-capping protein subunit beta (CAPZB), WASHC1, WASHC2, WASHC3, WASHC4 and WASHC5. In terms of tissue distribution, exclusively expressed in the testis.

It is found in the cytoplasm. Its subcellular location is the cytoskeleton. In terms of biological role, F-actin-capping proteins bind in a Ca(2+)-independent manner to the fast growing ends of actin filaments (barbed end) thereby blocking the exchange of subunits at these ends. Unlike other capping proteins (such as gelsolin and severin), these proteins do not sever actin filaments. May play a role in the morphogenesis of spermatid. This is F-actin-capping protein subunit alpha-3 (Capza3) from Mus musculus (Mouse).